A 134-amino-acid chain; its full sequence is ATP synthase epsilon chain (134 aa).

Belongs to the ATPase epsilon chain family. As to quaternary structure, F-type ATPases have 2 components, CF(1) - the catalytic core - and CF(0) - the membrane proton channel. CF(1) has five subunits: alpha(3), beta(3), gamma(1), delta(1), epsilon(1). CF(0) has three main subunits: a, b and c.

Its subcellular location is the cell membrane. Produces ATP from ADP in the presence of a proton gradient across the membrane. This chain is ATP synthase epsilon chain, found in Listeria innocua serovar 6a (strain ATCC BAA-680 / CLIP 11262).